A 667-amino-acid chain; its full sequence is Putative L-type lectin-domain containing receptor kinase I.4 (667 aa).

Residues 1–21 form the signal peptide; that stretch reads MDCRLHLVLFFSCVCLICLSG. The Extracellular portion of the chain corresponds to 22 to 294; the sequence is QQETGFVYNG…PREEKKKLHP (273 aa). The legume-lectin like stretch occupies residues 24–257; that stretch reads ETGFVYNGFH…NQYILGWSFS (234 aa). N-linked (GlcNAc...) asparagine glycans are attached at residues N55, N110, N124, N128, N181, N204, and N225. Residues 295-315 traverse the membrane as a helical segment; it reads LLIGLVILLVIPVLMVLGGVY. Residues 316–667 lie on the Cytoplasmic side of the membrane; it reads WYRRKKYAEV…THSILEGYGR (352 aa). One can recognise a Protein kinase domain in the interval 350 to 625; sequence FVKDALVGKG…QYLSQKQPLP (276 aa). ATP contacts are provided by residues 356–364 and K378; that span reads VGKGGFGKV. The active-site Proton acceptor is D474.

In the C-terminal section; belongs to the protein kinase superfamily. Ser/Thr protein kinase family. It in the N-terminal section; belongs to the leguminous lectin family.

The protein localises to the cell membrane. It catalyses the reaction L-seryl-[protein] + ATP = O-phospho-L-seryl-[protein] + ADP + H(+). It carries out the reaction L-threonyl-[protein] + ATP = O-phospho-L-threonyl-[protein] + ADP + H(+). The protein is Putative L-type lectin-domain containing receptor kinase I.4 (LECRK14) of Arabidopsis thaliana (Mouse-ear cress).